A 333-amino-acid chain; its full sequence is MGVPLLDVSQLQAGPEARKQYLQALVQSFRDYGFVRLTKHDVPAKRVQRIFDLSTQMFNLDIDSKLEFANIADGSPQRGYSAVGVEKTASLHGNLIGRRVDEKLTDAREHFDCGSPLDKSFANRWPEKLQGFQQELESFYFELEQVTAGILGSLEEALNCPPGTLNNMITKENNASELRLNHYPPVPAGTLRNGNVARIWPHFDLGVITLLFTSAVGGLEVEDRNAPGPQTFIPVEPETEAELIVNISETLQRWTDDHLPAGLHRVTIPKDLDTEIQNDANVEIPGRYSIAYLCKADREADVGTLPVFQTGEAPRYKAMTASEYHRSRLLTAY.

The region spanning Asn-174–Ala-296 is the Fe2OG dioxygenase domain. His-202, Asp-204, and His-264 together coordinate Fe cation. Position 287 (Arg-287) interacts with 2-oxoglutarate.

Belongs to the iron/ascorbate-dependent oxidoreductase family. Fe(2+) serves as cofactor.

It participates in mycotoxin biosynthesis. 2-oxoglutarate-dependent dioxygenase; part of the gene cluster that mediates the biosynthesis of UCS1025A, a member of the pyrrolizidinone family that acts as a strong telomerase inhibitor and displays potent antibacterial and antitumor properties. These compounds share a hemiaminal-containing pyrrolizidinone core fused with a gamma-lactone, giving a furopyrrolizidine that is connected to a decalin fragment. The polyketide synthase module (PKS) of the PKS-NRPS ucsA is responsible for the synthesis of the polyketide backbone via the condensation of an acetyl-CoA starter unit with 6 malonyl-CoA units. The downstream nonribosomal peptide synthetase (NRPS) module then amidates the carboxyl end of the polyketide with a 2S,3S-methylproline derived from L-isoleucine by the 2-oxoglutarate-dependent dioxygenase ucsF which converts L-isoleucine to (4S,5S)-4-methylpyrroline-5-carboxylate that is further converted to 2S,3S-methylproline by the pyrroline-5-carboxylate reductase ucsG. Reductive release of the completed aminoacyl polyketide from the assembly line can form the 3-pyrrolin-2-one structure via an intramolecular Knoevenagel reaction. Because ucsA lacks a designated enoylreductase (ER) domain, the required activity is provided the enoyl reductase ucsL. This keto acyclic precursor is the substrate of the Diels-Alderase ucsH, that catalyzes the Diels-Alder cycloaddition. Oxidation of the 3S-methyl group to a carboxylate by the cytochrome P450 monooxygenase ucsK allows an oxa-Michael cyclization that might involve the reductase/dehydrogenase ucsI and which furnishes the furopyrrolizidine. The oxidase ucsJ likely plays a critical role in stereoselective reduction of the C5-C6 double bond to afford the required R-configured carboxylate group. Further enolization and oxidation at C5 by an unidentified enzyme affords the last intermediate that can undergo oxa-Michael cyclization to yield UCS1025A. The protein is 2-oxoglutarate-dependent dioxygenase ucsF of Acremonium sp.